The sequence spans 111 residues: uncharacterized protein (111 aa).

3 helical membrane passes run 4–23 (LHQVLIACVIGGIMGILGHV), 39–61 (IYLGFLEDWFIGMTASILLVLSA), and 65–84 (SGIQLVILSIISGYGGEAVL).

The protein resides in the cell membrane. This is an uncharacterized protein from Bacillus subtilis (strain 168).